Here is a 161-residue protein sequence, read N- to C-terminus: RNA pyrophosphohydrolase (161 aa).

The Nudix hydrolase domain maps to Gly-6 to Val-149. Positions Gly-38–Gly-59 match the Nudix box motif.

It belongs to the Nudix hydrolase family. RppH subfamily. The cofactor is a divalent metal cation.

Accelerates the degradation of transcripts by removing pyrophosphate from the 5'-end of triphosphorylated RNA, leading to a more labile monophosphorylated state that can stimulate subsequent ribonuclease cleavage. This is RNA pyrophosphohydrolase from Acinetobacter baumannii (strain AB307-0294).